Reading from the N-terminus, the 654-residue chain is Probable Xaa-Pro aminopeptidase P (654 aa).

The Mn(2+) site is built by Asp449, Asp460, Glu558, and Glu572.

Belongs to the peptidase M24B family. Requires Mn(2+) as cofactor.

The enzyme catalyses Release of any N-terminal amino acid, including proline, that is linked to proline, even from a dipeptide or tripeptide.. Its function is as follows. Catalyzes the removal of a penultimate prolyl residue from the N-termini of peptides. This is Probable Xaa-Pro aminopeptidase P (ampp) from Neosartorya fischeri (strain ATCC 1020 / DSM 3700 / CBS 544.65 / FGSC A1164 / JCM 1740 / NRRL 181 / WB 181) (Aspergillus fischerianus).